We begin with the raw amino-acid sequence, 438 residues long: Ornithine aminotransferase car2 (438 aa).

Position 275 is an N6-(pyridoxal phosphate)lysine (lysine 275).

It belongs to the class-III pyridoxal-phosphate-dependent aminotransferase family. Pyridoxal 5'-phosphate serves as cofactor.

Its subcellular location is the cytoplasm. The protein resides in the nucleus. The catalysed reaction is a 2-oxocarboxylate + L-ornithine = L-glutamate 5-semialdehyde + an L-alpha-amino acid. It participates in amino-acid biosynthesis; L-proline biosynthesis; L-glutamate 5-semialdehyde from L-ornithine: step 1/1. The chain is Ornithine aminotransferase car2 (car2) from Schizosaccharomyces pombe (strain 972 / ATCC 24843) (Fission yeast).